The sequence spans 438 residues: Glycosyl hydrolase family 109 protein (438 aa).

The tat-type signal signal peptide spans 1–33; sequence MDKTSRRDLLKLASLAGIGAGLARSQGSSKSMA. NAD(+) contacts are provided by residues 52 to 53, aspartate 74, 125 to 128, 145 to 146, and asparagine 174; these read GR, WVWH, and EV. Substrate is bound by residues tyrosine 203, arginine 221, 233–236, and tyrosine 315; that span reads YPTH. Tyrosine 233 provides a ligand contact to NAD(+). The interval 408 to 438 is disordered; sequence GPLSEASVANGSAPQKFPDFTRGKWQTRQPV.

The protein belongs to the Gfo/Idh/MocA family. Glycosyl hydrolase 109 subfamily. The cofactor is NAD(+). Post-translationally, predicted to be exported by the Tat system. The position of the signal peptide cleavage has not been experimentally proven.

Its function is as follows. Glycosidase. The protein is Glycosyl hydrolase family 109 protein of Solibacter usitatus (strain Ellin6076).